The following is a 268-amino-acid chain: UDP-2,3-diacylglucosamine hydrolase (268 aa).

Mn(2+) contacts are provided by Asp-25, His-27, Asp-58, Asn-97, and His-132. 97–98 (NR) contributes to the substrate binding site. Residues Asp-140, Ser-178, Glu-191, and His-222 each coordinate substrate. Mn(2+) is bound by residues His-222 and His-224.

This sequence belongs to the LpxH family. Requires Mn(2+) as cofactor.

The protein resides in the cell inner membrane. It catalyses the reaction UDP-2-N,3-O-bis[(3R)-3-hydroxytetradecanoyl]-alpha-D-glucosamine + H2O = 2-N,3-O-bis[(3R)-3-hydroxytetradecanoyl]-alpha-D-glucosaminyl 1-phosphate + UMP + 2 H(+). It functions in the pathway glycolipid biosynthesis; lipid IV(A) biosynthesis; lipid IV(A) from (3R)-3-hydroxytetradecanoyl-[acyl-carrier-protein] and UDP-N-acetyl-alpha-D-glucosamine: step 4/6. In terms of biological role, hydrolyzes the pyrophosphate bond of UDP-2,3-diacylglucosamine to yield 2,3-diacylglucosamine 1-phosphate (lipid X) and UMP by catalyzing the attack of water at the alpha-P atom. Involved in the biosynthesis of lipid A, a phosphorylated glycolipid that anchors the lipopolysaccharide to the outer membrane of the cell. The chain is UDP-2,3-diacylglucosamine hydrolase from Ralstonia nicotianae (strain ATCC BAA-1114 / GMI1000) (Ralstonia solanacearum).